The following is a 65-amino-acid chain: Crotamine (65 aa).

Residues 1 to 22 (MKILYLLFAFLFLAFLSEPGNA) form the signal peptide. 2 consecutive short sequence motifs (nuclear localization signal) follow at residues 24–40 (KQCHKKGGHCFPKEKIC) and 49–61 (KMDCRWRWKCCKK). 3 cysteine pairs are disulfide-bonded: cysteine 26–cysteine 58, cysteine 33–cysteine 52, and cysteine 40–cysteine 59.

This sequence belongs to the crotamine-myotoxin family. Monomer. Expressed by the venom gland.

The protein localises to the secreted. In terms of biological role, cationic peptide that possesses multiple functions. It acts as a cell-penetrating peptide (CPP), and as a potent voltage-gated potassium channel inhibitor. It exhibits antimicrobial activities, hind limb paralysis, and severe muscle necrosis by a non-enzymatic mechanism. As a cell-penetrating peptide, crotamine has high specificity for actively proliferating cells, and interacts inside the cell with subcellular and subnuclear structures, like vesicular compartments, chromosomes and centrioles. It penetrates into the cells as fast as five minutes after its addition to cell culture medium. In vivo, after intraperitoneal administration, it is found in cells of peritoneal fluid and bone marrow, demonstrating preferential nuclear and perinuclear localization. To enter the cell, it interacts with the chains of heparan sulfate membrane proteoglycan (HSPG), and is endocytosed (in complex with HSPG) in vesicles which are transported into the cell with the help of clathrin. Inside the cell, crotamine accumulates in lysosomal vesicles. As soon as the peptide accumulates in endosomes/lysosomes vesicles, these compartments are disrupted and their contents released into the cytosol. This loss of lysosomal content induces cell death at high concentrations, or promotes the distribution of crotamine in cytoplasmic compartments, which is a step before crotamine nuclear uptake. As a potassium channel inhibitor, this toxin selectively inhibits Kv1.1/KCNA1, Kv1.2/KCNA2 and Kv1.3/KCNA3 channels with an IC(50) of 369, 386 and 287 nM, respectively. The inhibition of Kv1.3/KCNA channels induced by this toxin occurs rapidly and is voltage-independent. The channel inhibition is reversible after washing, suggesting a pure and classical channel blockage effect, without effects in potassium channel kinetics. As an antimicrobial peptide, crotamine shows antibacterial activity against E.coli and B.subtilis, and antifungal activity against Candida spp., Trichosporon spp. and C.neoformans. It kills bacteria through membrane permeabilization. The chain is Crotamine (CRO2) from Crotalus durissus terrificus (South American rattlesnake).